Consider the following 472-residue polypeptide: FAD-dependent monooxygenase dpmaE (472 aa).

The first 24 residues, 1–24 (MSQRQFKVIIIGGSVTGLTLAHSL), serve as a signal peptide directing secretion. FAD is bound by residues glutamate 35, glycine 49, and arginine 108. Asparagine 128 and asparagine 179 each carry an N-linked (GlcNAc...) asparagine glycan. 2 residues coordinate FAD: aspartate 305 and alanine 318. An N-linked (GlcNAc...) asparagine glycan is attached at asparagine 369. Residues 440-460 (LLPLMFTLPLLYFGLSWIVGI) traverse the membrane as a helical segment.

It belongs to the paxM FAD-dependent monooxygenase family. Requires FAD as cofactor.

The protein resides in the membrane. The protein operates within secondary metabolite biosynthesis; terpenoid biosynthesis. Its function is as follows. FAD-dependent monooxygenase; part of the gene cluster that mediates the biosynthesis of the diterpenoid pyrones subglutinols A and B. The first step of the pathway is the synthesis of the alpha-pyrone moiety by the polyketide synthase dpmaA via condensation of one acetyl-CoA starter unit with 3 malonyl-CoA units and 2 methylations. The alpha-pyrone is then combined with geranylgeranyl pyrophosphate (GGPP) formed by the GGPP synthase dpmaD through the action of the prenyltransferase dpmaC to yield a linear alpha-pyrone diterpenoid. Subsequent steps in the diterpenoid pyrone biosynthetic pathway involve the decalin core formation, which is initiated by the epoxidation of the C10-C11 olefin by the FAD-dependent oxidoreductase dpmaE, and is followed by a cyclization cascade catalyzed by the terpene cyclase dpmaB. The dehydrogenase dpmaF is then involved in tetrahydrofuran (THF) ring formation at the C5 unit to complete the formation of subglutinols A and B. This chain is FAD-dependent monooxygenase dpmaE, found in Metarhizium anisopliae (Entomophthora anisopliae).